The primary structure comprises 76 residues: Dermaseptin-H1 (76 aa).

The first 22 residues, 1–22, serve as a signal peptide directing secretion; it reads MDILKKSLFIVLFLGLVSLSIC. Positions 23 to 45 are excised as a propeptide; that stretch reads EEEKRENEDEEEQEDDEQSEEKR. A disordered region spans residues 25 to 44; sequence EKRENEDEEEQEDDEQSEEK. Acidic residues predominate over residues 30–41; that stretch reads EDEEEQEDDEQS. Gln73 carries the glutamine amide modification. The propeptide occupies 75 to 76; sequence EQ.

In terms of tissue distribution, expressed by the skin glands.

It is found in the secreted. Its function is as follows. Has antimicrobial activity. This Pithecopus hypochondrialis (Orange-legged leaf frog) protein is Dermaseptin-H1.